The chain runs to 313 residues: MTDLDSSLPPSVRTAGDSWTITELVGATALGVAAARAAETAGPDPLIRDEFAGLLVSSAGPAWARLADPEQSWLDDDPHGKRAHRVGIDYQAVRTHYFDEYFDGALRAGIRQVVILAAGLDSRAYRLNWPAGTTVYEIDQPKVLEYKTETLQRHGATPAAVRRPVPVDLRDDWPAALTAAGFQAARPTAWLAEGLLPYLPSDAQDRLFEMVTALSAAGSQVAVEVFGMNSRSNAQRWLRMRERLGLDVNVAALTYHEPDRSDAAAWLTGHGWRVHSVDNRDEMARLGRPVPEDLSDEAVRSTLLRAHLGGSTG.

Residues Asp-139 and 168–169 (DL) contribute to the S-adenosyl-L-methionine site.

Belongs to the UPF0677 family.

Exhibits S-adenosyl-L-methionine-dependent methyltransferase activity. The sequence is that of Putative S-adenosyl-L-methionine-dependent methyltransferase MAV_5150 from Mycobacterium avium (strain 104).